We begin with the raw amino-acid sequence, 82 residues long: UPF0213 protein SSP2268 (82 aa).

One can recognise a GIY-YIG domain in the interval 2 to 77 (DKHYIYIVKC…KTFSRQKKLK (76 aa)).

Belongs to the UPF0213 family.

The sequence is that of UPF0213 protein SSP2268 from Staphylococcus saprophyticus subsp. saprophyticus (strain ATCC 15305 / DSM 20229 / NCIMB 8711 / NCTC 7292 / S-41).